Here is a 289-residue protein sequence, read N- to C-terminus: 4-hydroxy-3-methylbut-2-enyl diphosphate reductase (289 aa).

Residue Cys-12 participates in [4Fe-4S] cluster binding. Residues His-44 and His-81 each coordinate (2E)-4-hydroxy-3-methylbut-2-enyl diphosphate. Dimethylallyl diphosphate-binding residues include His-44 and His-81. Positions 44 and 81 each coordinate isopentenyl diphosphate. Cys-103 lines the [4Fe-4S] cluster pocket. His-130 provides a ligand contact to (2E)-4-hydroxy-3-methylbut-2-enyl diphosphate. His-130 lines the dimethylallyl diphosphate pocket. Residue His-130 participates in isopentenyl diphosphate binding. Catalysis depends on Glu-132, which acts as the Proton donor. Residue Thr-174 coordinates (2E)-4-hydroxy-3-methylbut-2-enyl diphosphate. Cys-202 contributes to the [4Fe-4S] cluster binding site. (2E)-4-hydroxy-3-methylbut-2-enyl diphosphate is bound by residues Ser-230, Asn-232, and Ser-273. Ser-230, Asn-232, and Ser-273 together coordinate dimethylallyl diphosphate. Isopentenyl diphosphate contacts are provided by Ser-230, Asn-232, and Ser-273.

It belongs to the IspH family. [4Fe-4S] cluster is required as a cofactor.

It catalyses the reaction isopentenyl diphosphate + 2 oxidized [2Fe-2S]-[ferredoxin] + H2O = (2E)-4-hydroxy-3-methylbut-2-enyl diphosphate + 2 reduced [2Fe-2S]-[ferredoxin] + 2 H(+). It carries out the reaction dimethylallyl diphosphate + 2 oxidized [2Fe-2S]-[ferredoxin] + H2O = (2E)-4-hydroxy-3-methylbut-2-enyl diphosphate + 2 reduced [2Fe-2S]-[ferredoxin] + 2 H(+). It participates in isoprenoid biosynthesis; dimethylallyl diphosphate biosynthesis; dimethylallyl diphosphate from (2E)-4-hydroxy-3-methylbutenyl diphosphate: step 1/1. The protein operates within isoprenoid biosynthesis; isopentenyl diphosphate biosynthesis via DXP pathway; isopentenyl diphosphate from 1-deoxy-D-xylulose 5-phosphate: step 6/6. In terms of biological role, catalyzes the conversion of 1-hydroxy-2-methyl-2-(E)-butenyl 4-diphosphate (HMBPP) into a mixture of isopentenyl diphosphate (IPP) and dimethylallyl diphosphate (DMAPP). Acts in the terminal step of the DOXP/MEP pathway for isoprenoid precursor biosynthesis. The chain is 4-hydroxy-3-methylbut-2-enyl diphosphate reductase from Treponema denticola (strain ATCC 35405 / DSM 14222 / CIP 103919 / JCM 8153 / KCTC 15104).